The following is a 184-amino-acid chain: Putative DNA-directed RNA polymerase subunit 454R (184 aa).

This sequence belongs to the archaeal Rpo5/eukaryotic RPB5 RNA polymerase subunit family.

Its function is as follows. Component of the DNA-dependent RNA polymerase that catalyzes the transcription in the cytoplasm of viral DNA into RNA using the four ribonucleoside triphosphates as substrates. The protein is Putative DNA-directed RNA polymerase subunit 454R of Invertebrate iridescent virus 6 (IIV-6).